A 425-amino-acid chain; its full sequence is Alpha-(1,3)-fucosyltransferase C (425 aa).

At 1 to 37 (MYLGRVHCSFEVPGLLSGRVGHMSMAVRSVRLACGPR) the chain is on the cytoplasmic side. Residues 38–58 (GALLLLLLVLLGVLVVLHKVT) traverse the membrane as a helical; Signal-anchor for type II membrane protein segment. The Lumenal portion of the chain corresponds to 59–425 (QSPLLNQNKI…SCRLQSRIRL (367 aa)). 2 N-linked (GlcNAc...) asparagine glycosylation sites follow: Asn-187 and Asn-230.

It belongs to the glycosyltransferase 10 family.

It localises to the golgi apparatus. Its subcellular location is the golgi stack membrane. Its pathway is protein modification; protein glycosylation. This is Alpha-(1,3)-fucosyltransferase C (FucTC) from Drosophila melanogaster (Fruit fly).